A 132-amino-acid chain; its full sequence is Small ribosomal subunit protein uS11 (132 aa).

The protein belongs to the universal ribosomal protein uS11 family. In terms of assembly, part of the 30S ribosomal subunit. Interacts with proteins S7 and S18. Binds to IF-3.

Its function is as follows. Located on the platform of the 30S subunit, it bridges several disparate RNA helices of the 16S rRNA. Forms part of the Shine-Dalgarno cleft in the 70S ribosome. The chain is Small ribosomal subunit protein uS11 from Chlamydia trachomatis serovar D (strain ATCC VR-885 / DSM 19411 / UW-3/Cx).